Reading from the N-terminus, the 413-residue chain is 4-hydroxy-3-methylbut-2-en-1-yl diphosphate synthase (flavodoxin) (413 aa).

Positions 305, 308, 351, and 358 each coordinate [4Fe-4S] cluster.

It belongs to the IspG family. [4Fe-4S] cluster serves as cofactor.

The enzyme catalyses (2E)-4-hydroxy-3-methylbut-2-enyl diphosphate + oxidized [flavodoxin] + H2O + 2 H(+) = 2-C-methyl-D-erythritol 2,4-cyclic diphosphate + reduced [flavodoxin]. It functions in the pathway isoprenoid biosynthesis; isopentenyl diphosphate biosynthesis via DXP pathway; isopentenyl diphosphate from 1-deoxy-D-xylulose 5-phosphate: step 5/6. Its function is as follows. Converts 2C-methyl-D-erythritol 2,4-cyclodiphosphate (ME-2,4cPP) into 1-hydroxy-2-methyl-2-(E)-butenyl 4-diphosphate. This chain is 4-hydroxy-3-methylbut-2-en-1-yl diphosphate synthase (flavodoxin), found in Bartonella tribocorum (strain CIP 105476 / IBS 506).